The following is a 331-amino-acid chain: MSTKEKLISHVMKEEPVGSRNKVTVVGVGMVGMASAISILLKDLCDELAMVDVMEDKLKGEVMDLQHGSLFLKTKIVGDKDYSVTANSKVVVVTAGARQQEGESRLNLVQRNVNIFKFIIPNIVKYSPNCILMVVSNPVDILTYVAWKLSGFPRHRVIGSGTNLDSARFRHLIGEKLHLHPSSCHAWIVGEHGDSSVPVWSGVNVAGVSLQGLNPQMGTEGDGENWKAIHKEVVDGAYEVIKLKGYTSWAIGMSVADLVESIIKNMHKVHPVSTLVQGMHGVKDEVFLSVPCVLGNSGLTDVIHMTLKAEEEKQVQKSAETLWGVQKELTL.

Residues 29 to 57 (GMVG…MEDK) and arginine 98 each bind NAD(+). Substrate is bound by residues arginine 105, asparagine 137, and arginine 168. Asparagine 137 lines the NAD(+) pocket. The active-site Proton acceptor is histidine 192. Substrate is bound at residue threonine 247.

It belongs to the LDH/MDH superfamily. LDH family. In terms of assembly, homotetramer.

Its subcellular location is the cytoplasm. It carries out the reaction (S)-lactate + NAD(+) = pyruvate + NADH + H(+). It functions in the pathway fermentation; pyruvate fermentation to lactate; (S)-lactate from pyruvate: step 1/1. In terms of biological role, interconverts simultaneously and stereospecifically pyruvate and lactate with concomitant interconversion of NADH and NAD(+). In Notothenia angustata (Rockcod), this protein is L-lactate dehydrogenase A chain (ldha).